The following is a 717-amino-acid chain: Photosystem I P700 chlorophyll a apoprotein A1 (717 aa).

Transmembrane regions (helical) follow at residues 59-82 (VFRAHFGQLAIILIWLSGMYFHGA), 145-168 (LYCTAIGALIFAALMLFAGWFHYH), 184-208 (LNHHLAGLLGLGSLSWAGHQVHVSL), 280-298 (TAHHHLAIAILFLIAGHMY), 335-358 (WHAQLALNLAMLGSLTIVVAHHMY), 374-400 (LSLFTHHMWIGGFLIVGAAAHAAIFMV), 422-444 (AIVSHLNWACIFLGFHSFGLYIH), and 520-538 (FLVHHIHAFTIHVTVLILL). 2 residues coordinate [4Fe-4S] cluster: C562 and C571. 2 consecutive transmembrane segments (helical) span residues 578–599 (HVFLGLFWMYNAISVVIFHFSW) and 653–675 (LSAYGLLFLGAHXVWAFSLMFLF). H664 lines the chlorophyll a' pocket. The chlorophyll a site is built by M672 and Y680. W681 lines the phylloquinone pocket. A helical transmembrane segment spans residues 713-717 (AVGVA).

Belongs to the PsaA/PsaB family. The PsaA/B heterodimer binds the P700 chlorophyll special pair and subsequent electron acceptors. PSI consists of a core antenna complex that captures photons, and an electron transfer chain that converts photonic excitation into a charge separation. The eukaryotic PSI reaction center is composed of at least 11 subunits. The cofactor is P700 is a chlorophyll a/chlorophyll a' dimer, A0 is one or more chlorophyll a, A1 is one or both phylloquinones and FX is a shared 4Fe-4S iron-sulfur center..

The protein localises to the plastid. The protein resides in the chloroplast thylakoid membrane. The enzyme catalyses reduced [plastocyanin] + hnu + oxidized [2Fe-2S]-[ferredoxin] = oxidized [plastocyanin] + reduced [2Fe-2S]-[ferredoxin]. PsaA and PsaB bind P700, the primary electron donor of photosystem I (PSI), as well as the electron acceptors A0, A1 and FX. PSI is a plastocyanin-ferredoxin oxidoreductase, converting photonic excitation into a charge separation, which transfers an electron from the donor P700 chlorophyll pair to the spectroscopically characterized acceptors A0, A1, FX, FA and FB in turn. Oxidized P700 is reduced on the lumenal side of the thylakoid membrane by plastocyanin. In Cycas revoluta (Sago palm), this protein is Photosystem I P700 chlorophyll a apoprotein A1.